The primary structure comprises 419 residues: L-rhamnose isomerase (419 aa).

Mn(2+) contacts are provided by His262, Asp294, and Asp296.

It belongs to the rhamnose isomerase family. In terms of assembly, homotetramer. Requires Mn(2+) as cofactor.

Its subcellular location is the cytoplasm. The catalysed reaction is L-rhamnopyranose = L-rhamnulose. It participates in carbohydrate degradation; L-rhamnose degradation; glycerone phosphate from L-rhamnose: step 1/3. Functionally, catalyzes the interconversion of L-rhamnose and L-rhamnulose. The sequence is that of L-rhamnose isomerase from Escherichia coli (strain SMS-3-5 / SECEC).